A 340-amino-acid chain; its full sequence is Arginase 1, mitochondrial (340 aa).

The N-terminal 24 residues, 1–24 (MGGVAAGTRWIHHVRRLSAAKVST), are a transit peptide targeting the mitochondrion. Residues His159, Asp183, His185, and Asp187 each coordinate Mn(2+). Substrate is bound by residues 185–189 (HPDIY) and 193–195 (EGN). The Mn(2+) site is built by Asp268 and Asp270. Glu311 is a binding site for substrate.

Belongs to the arginase family. Mn(2+) serves as cofactor.

Its subcellular location is the mitochondrion. The enzyme catalyses L-arginine + H2O = urea + L-ornithine. The protein operates within nitrogen metabolism; urea cycle; L-ornithine and urea from L-arginine: step 1/1. Functionally, catalyzes the hydrolysis of L-arginine to urea and L-ornithine. The latter can be utilized in the urea cycle or as a precursor for the synthesis of both polyamines and proline. The sequence is that of Arginase 1, mitochondrial from Oryza sativa subsp. indica (Rice).